The following is a 157-amino-acid chain: Crossover junction endodeoxyribonuclease RuvC (157 aa).

Active-site residues include Asp-7, Glu-67, and Asp-140. The Mg(2+) site is built by Asp-7, Glu-67, and Asp-140.

It belongs to the RuvC family. As to quaternary structure, homodimer which binds Holliday junction (HJ) DNA. The HJ becomes 2-fold symmetrical on binding to RuvC with unstacked arms; it has a different conformation from HJ DNA in complex with RuvA. In the full resolvosome a probable DNA-RuvA(4)-RuvB(12)-RuvC(2) complex forms which resolves the HJ. Requires Mg(2+) as cofactor.

Its subcellular location is the cytoplasm. It catalyses the reaction Endonucleolytic cleavage at a junction such as a reciprocal single-stranded crossover between two homologous DNA duplexes (Holliday junction).. In terms of biological role, the RuvA-RuvB-RuvC complex processes Holliday junction (HJ) DNA during genetic recombination and DNA repair. Endonuclease that resolves HJ intermediates. Cleaves cruciform DNA by making single-stranded nicks across the HJ at symmetrical positions within the homologous arms, yielding a 5'-phosphate and a 3'-hydroxyl group; requires a central core of homology in the junction. The consensus cleavage sequence is 5'-(A/T)TT(C/G)-3'. Cleavage occurs on the 3'-side of the TT dinucleotide at the point of strand exchange. HJ branch migration catalyzed by RuvA-RuvB allows RuvC to scan DNA until it finds its consensus sequence, where it cleaves and resolves the cruciform DNA. This is Crossover junction endodeoxyribonuclease RuvC from Rickettsia massiliae (strain Mtu5).